Consider the following 89-residue polypeptide: Large ribosomal subunit protein bL27 (89 aa).

The tract at residues 1–26 (MATKKAGGSSKNGRDSAGRRLGLKKT) is disordered.

This sequence belongs to the bacterial ribosomal protein bL27 family.

The protein is Large ribosomal subunit protein bL27 of Orientia tsutsugamushi (strain Boryong) (Rickettsia tsutsugamushi).